Here is a 402-residue protein sequence, read N- to C-terminus: UPF0597 protein THA_1286 (402 aa).

It belongs to the UPF0597 family.

The protein is UPF0597 protein THA_1286 of Thermosipho africanus (strain TCF52B).